A 133-amino-acid polypeptide reads, in one-letter code: MSSEQQKLRWGIAWIYSSSNNTIITITDLTGAETVARVSGGQVVRADKDKPSPWAAMQAAYKAAQLALARGINAVHIKVRGPGGYGMKVPGPGASAAIRALARSGLVIGRIEDVTPIPHDIIRPPSGRKGRRV.

It belongs to the universal ribosomal protein uS11 family. As to quaternary structure, part of the 30S ribosomal subunit.

Its function is as follows. Located on the platform of the 30S subunit. This Pyrobaculum aerophilum (strain ATCC 51768 / DSM 7523 / JCM 9630 / CIP 104966 / NBRC 100827 / IM2) protein is Small ribosomal subunit protein uS11.